We begin with the raw amino-acid sequence, 287 residues long: Inhibitory synaptic factor 1 (287 aa).

Residues 1 to 22 (MSQSRAPAREPSETPSQREQIR) form a disordered region. Residues 25–58 (MKMVIQQLEGILKELKDVAHELREVVGQIDKLTS) adopt a coiled-coil conformation. 2 disordered regions span residues 113–174 (RRSA…GTRE) and 189–287 (CDDD…NKDL). Residues 153–167 (EEASSSTHSQSQKTS) are compositionally biased toward low complexity. The span at 189–209 (CDDDEDEDEDEDGRDEEEDKL) shows a compositional bias: acidic residues. Residues 259 to 274 (RNSSTQTVSDKSTQTL) are compositionally biased toward polar residues.

Belongs to the INSYN1 family.

The protein resides in the postsynaptic density. In terms of biological role, may be a component of the protein machinery at the inhibitory synapses, probably acting as a scaffold. This is Inhibitory synaptic factor 1 from Danio rerio (Zebrafish).